Here is a 209-residue protein sequence, read N- to C-terminus: Ribosomal RNA large subunit methyltransferase E (209 aa).

S-adenosyl-L-methionine is bound by residues Gly-63, Trp-65, Asp-83, Asp-99, and Asp-124. Lys-164 (proton acceptor) is an active-site residue.

It belongs to the class I-like SAM-binding methyltransferase superfamily. RNA methyltransferase RlmE family.

The protein resides in the cytoplasm. It catalyses the reaction uridine(2552) in 23S rRNA + S-adenosyl-L-methionine = 2'-O-methyluridine(2552) in 23S rRNA + S-adenosyl-L-homocysteine + H(+). Its function is as follows. Specifically methylates the uridine in position 2552 of 23S rRNA at the 2'-O position of the ribose in the fully assembled 50S ribosomal subunit. This chain is Ribosomal RNA large subunit methyltransferase E, found in Proteus mirabilis (strain HI4320).